Here is a 157-residue protein sequence, read N- to C-terminus: UPF0225 protein Psyr_3863 (157 aa).

Belongs to the UPF0225 family.

The protein is UPF0225 protein Psyr_3863 of Pseudomonas syringae pv. syringae (strain B728a).